The primary structure comprises 367 residues: 2-aminoethylphosphonate--pyruvate transaminase (367 aa).

Lysine 194 carries the post-translational modification N6-(pyridoxal phosphate)lysine.

This sequence belongs to the class-V pyridoxal-phosphate-dependent aminotransferase family. PhnW subfamily. In terms of assembly, homodimer. Pyridoxal 5'-phosphate is required as a cofactor.

It catalyses the reaction (2-aminoethyl)phosphonate + pyruvate = phosphonoacetaldehyde + L-alanine. Involved in phosphonate degradation. The chain is 2-aminoethylphosphonate--pyruvate transaminase from Salmonella heidelberg (strain SL476).